The chain runs to 330 residues: DNA-directed RNA polymerase subunit alpha (330 aa).

The interval M1–K237 is alpha N-terminal domain (alpha-NTD). An alpha C-terminal domain (alpha-CTD) region spans residues F251 to E330.

Belongs to the RNA polymerase alpha chain family. As to quaternary structure, homodimer. The RNAP catalytic core consists of 2 alpha, 1 beta, 1 beta' and 1 omega subunit. When a sigma factor is associated with the core the holoenzyme is formed, which can initiate transcription.

It catalyses the reaction RNA(n) + a ribonucleoside 5'-triphosphate = RNA(n+1) + diphosphate. Its function is as follows. DNA-dependent RNA polymerase catalyzes the transcription of DNA into RNA using the four ribonucleoside triphosphates as substrates. The sequence is that of DNA-directed RNA polymerase subunit alpha from Legionella pneumophila subsp. pneumophila (strain Philadelphia 1 / ATCC 33152 / DSM 7513).